An 824-amino-acid polypeptide reads, in one-letter code: Type IV secretion system protein PtlC (824 aa).

456 to 463 (GQSGSGKT) contacts ATP.

This sequence belongs to the TrbE/VirB4 family.

It is found in the cell membrane. Functionally, component of the type IV secretion system ptl essential for secretion of assembled pertussis toxin (PTX) through the outer membrane. This chain is Type IV secretion system protein PtlC (ptlC), found in Bordetella pertussis (strain Tohama I / ATCC BAA-589 / NCTC 13251).